A 380-amino-acid chain; its full sequence is Cytochrome b (380 aa).

4 helical membrane passes run 33–53 (FGSL…FLAM), 77–98 (WLIR…YMHI), 113–133 (WNIG…GYVL), and 178–198 (FFAF…LHLL). Heme b contacts are provided by H83 and H97. Residues H182 and H196 each coordinate heme b. Residue H201 coordinates a ubiquinone. 4 consecutive transmembrane segments (helical) span residues 226–246 (YKDL…ALFA), 288–308 (LGGV…PILH), 320–340 (LTQF…WIGG), and 347–367 (FIII…VLSP).

It belongs to the cytochrome b family. In terms of assembly, the cytochrome bc1 complex contains 3 respiratory subunits (MT-CYB, CYC1 and UQCRFS1), 2 core proteins (UQCRC1 and UQCRC2) and probably 6 low-molecular weight proteins. It depends on heme b as a cofactor.

The protein resides in the mitochondrion inner membrane. In terms of biological role, component of the ubiquinol-cytochrome c reductase complex (complex III or cytochrome b-c1 complex) that is part of the mitochondrial respiratory chain. The b-c1 complex mediates electron transfer from ubiquinol to cytochrome c. Contributes to the generation of a proton gradient across the mitochondrial membrane that is then used for ATP synthesis. The protein is Cytochrome b (mt-cyb) of Oncorhynchus mykiss (Rainbow trout).